Reading from the N-terminus, the 86-residue chain is Small ribosomal subunit protein uS17 (86 aa).

Belongs to the universal ribosomal protein uS17 family. Part of the 30S ribosomal subunit.

Functionally, one of the primary rRNA binding proteins, it binds specifically to the 5'-end of 16S ribosomal RNA. This is Small ribosomal subunit protein uS17 from Nitrosococcus oceani (strain ATCC 19707 / BCRC 17464 / JCM 30415 / NCIMB 11848 / C-107).